The chain runs to 1392 residues: DNA-directed RNA polymerase subunit beta'' (1392 aa).

Positions 224, 295, 302, and 305 each coordinate Zn(2+).

Belongs to the RNA polymerase beta' chain family. RpoC2 subfamily. In terms of assembly, in plastids the minimal PEP RNA polymerase catalytic core is composed of four subunits: alpha, beta, beta', and beta''. When a (nuclear-encoded) sigma factor is associated with the core the holoenzyme is formed, which can initiate transcription. Zn(2+) serves as cofactor.

It is found in the plastid. Its subcellular location is the chloroplast. The catalysed reaction is RNA(n) + a ribonucleoside 5'-triphosphate = RNA(n+1) + diphosphate. DNA-dependent RNA polymerase catalyzes the transcription of DNA into RNA using the four ribonucleoside triphosphates as substrates. The protein is DNA-directed RNA polymerase subunit beta'' of Solanum lycopersicum (Tomato).